Reading from the N-terminus, the 540-residue chain is NADH-quinone oxidoreductase subunit N (540 aa).

The next 14 helical transmembrane spans lie at 24–44 (LSPM…EAFL), 54–74 (LVLA…LAGT), 88–108 (PTLF…LIIA), 158–178 (APGH…MLLF), 184–204 (LLTM…LCGL), 219–239 (YFLL…LLYG), 263–283 (ALIG…AVPF), 295–315 (PTPI…GAML), 331–351 (PVMW…AVTQ), 357–377 (MLAY…VAAN), 385–405 (MFYL…VTLV), 428–448 (VGGV…TSGF), 462–482 (GAVP…FFYV), and 505–525 (MFTA…GILP).

Belongs to the complex I subunit 2 family. As to quaternary structure, NDH-1 is composed of 14 different subunits. Subunits NuoA, H, J, K, L, M, N constitute the membrane sector of the complex.

It localises to the cell membrane. It catalyses the reaction a quinone + NADH + 5 H(+)(in) = a quinol + NAD(+) + 4 H(+)(out). In terms of biological role, NDH-1 shuttles electrons from NADH, via FMN and iron-sulfur (Fe-S) centers, to quinones in the respiratory chain. The immediate electron acceptor for the enzyme in this species is believed to be a menaquinone. Couples the redox reaction to proton translocation (for every two electrons transferred, four hydrogen ions are translocated across the cytoplasmic membrane), and thus conserves the redox energy in a proton gradient. In Rhodococcus opacus (strain B4), this protein is NADH-quinone oxidoreductase subunit N.